Reading from the N-terminus, the 165-residue chain is Ribosome maturation factor RimM (165 aa).

Residues 90-161 enclose the PRC barrel domain; sequence EDEYFIVDLV…LITIRPSGEW (72 aa).

Belongs to the RimM family. As to quaternary structure, binds ribosomal protein uS19.

The protein localises to the cytoplasm. Its function is as follows. An accessory protein needed during the final step in the assembly of 30S ribosomal subunit, possibly for assembly of the head region. Essential for efficient processing of 16S rRNA. May be needed both before and after RbfA during the maturation of 16S rRNA. It has affinity for free ribosomal 30S subunits but not for 70S ribosomes. The polypeptide is Ribosome maturation factor RimM (Clostridium perfringens (strain ATCC 13124 / DSM 756 / JCM 1290 / NCIMB 6125 / NCTC 8237 / Type A)).